The sequence spans 165 residues: MFSMMNGLQHYGQQALRAARYIGQSFMVTLEHMNRLPITVQYPYEKIIPSERFRGRIHFEFDKCIACEVCVRVCPINLPVVDWELIKSMRKKQLKSYSIDFGVCIFCGNCVEYCPTNCLSMTEEYELATYDRHELNYDQIALSRLPFSIVQDSTIQAHSSLGYLS.

4Fe-4S ferredoxin-type domains follow at residues 55–84 and 95–124; these read GRIH…VDWE and KSYS…MTEE. 8 residues coordinate [4Fe-4S] cluster: Cys64, Cys67, Cys70, Cys74, Cys104, Cys107, Cys110, and Cys114.

This sequence belongs to the complex I 23 kDa subunit family. As to quaternary structure, NDH is composed of at least 16 different subunits, 5 of which are encoded in the nucleus. [4Fe-4S] cluster serves as cofactor.

The protein localises to the plastid. It localises to the chloroplast thylakoid membrane. The catalysed reaction is a plastoquinone + NADH + (n+1) H(+)(in) = a plastoquinol + NAD(+) + n H(+)(out). It carries out the reaction a plastoquinone + NADPH + (n+1) H(+)(in) = a plastoquinol + NADP(+) + n H(+)(out). Its function is as follows. NDH shuttles electrons from NAD(P)H:plastoquinone, via FMN and iron-sulfur (Fe-S) centers, to quinones in the photosynthetic chain and possibly in a chloroplast respiratory chain. The immediate electron acceptor for the enzyme in this species is believed to be plastoquinone. Couples the redox reaction to proton translocation, and thus conserves the redox energy in a proton gradient. This chain is NAD(P)H-quinone oxidoreductase subunit I, chloroplastic, found in Psilotum nudum (Whisk fern).